A 201-amino-acid polypeptide reads, in one-letter code: Recombination protein RecR (201 aa).

A C4-type zinc finger spans residues 60 to 75 (CETCGNIDTRSPCTIC). A Toprim domain is found at 83–178 (SIIVVVADVA…KVTRLAHGVP (96 aa)).

It belongs to the RecR family.

In terms of biological role, may play a role in DNA repair. It seems to be involved in an RecBC-independent recombinational process of DNA repair. It may act with RecF and RecO. In Nitrobacter winogradskyi (strain ATCC 25391 / DSM 10237 / CIP 104748 / NCIMB 11846 / Nb-255), this protein is Recombination protein RecR.